The chain runs to 318 residues: Methionyl-tRNA formyltransferase (318 aa).

Position 110–113 (110–113) interacts with (6S)-5,6,7,8-tetrahydrofolate; the sequence is SLLP.

Belongs to the Fmt family.

It carries out the reaction L-methionyl-tRNA(fMet) + (6R)-10-formyltetrahydrofolate = N-formyl-L-methionyl-tRNA(fMet) + (6S)-5,6,7,8-tetrahydrofolate + H(+). In terms of biological role, attaches a formyl group to the free amino group of methionyl-tRNA(fMet). The formyl group appears to play a dual role in the initiator identity of N-formylmethionyl-tRNA by promoting its recognition by IF2 and preventing the misappropriation of this tRNA by the elongation apparatus. In Lacticaseibacillus casei (strain BL23) (Lactobacillus casei), this protein is Methionyl-tRNA formyltransferase.